Consider the following 175-residue polypeptide: Adenine phosphoribosyltransferase (175 aa).

This sequence belongs to the purine/pyrimidine phosphoribosyltransferase family. As to quaternary structure, homodimer.

The protein resides in the cytoplasm. The catalysed reaction is AMP + diphosphate = 5-phospho-alpha-D-ribose 1-diphosphate + adenine. The protein operates within purine metabolism; AMP biosynthesis via salvage pathway; AMP from adenine: step 1/1. Catalyzes a salvage reaction resulting in the formation of AMP, that is energically less costly than de novo synthesis. In Lactobacillus acidophilus (strain ATCC 700396 / NCK56 / N2 / NCFM), this protein is Adenine phosphoribosyltransferase.